The following is a 341-amino-acid chain: Phenylalanine--tRNA ligase alpha subunit (341 aa).

E256 lines the Mg(2+) pocket.

It belongs to the class-II aminoacyl-tRNA synthetase family. Phe-tRNA synthetase alpha subunit type 1 subfamily. Tetramer of two alpha and two beta subunits. It depends on Mg(2+) as a cofactor.

The protein resides in the cytoplasm. The enzyme catalyses tRNA(Phe) + L-phenylalanine + ATP = L-phenylalanyl-tRNA(Phe) + AMP + diphosphate + H(+). This chain is Phenylalanine--tRNA ligase alpha subunit, found in Clostridium perfringens (strain 13 / Type A).